The following is a 354-amino-acid chain: Soluble interferon alpha/beta receptor OPG204 (354 aa).

Residues Met1–Phe22 form the signal peptide. 2 Ig-like C2-type domains span residues Ile68–Val150 and Pro158–Ser240. 2 cysteine pairs are disulfide-bonded: Cys76/Cys132 and Cys175/Cys224. Residues Asn120, Asn124, Asn185, Asn272, and Asn324 are each glycosylated (N-linked (GlcNAc...) asparagine; by host). An Ig-like V-type domain is found at Pro249–Thr348. The cysteines at positions 275 and 336 are disulfide-linked.

Belongs to the interleukin-1 receptor family. As to quaternary structure, interacts with host IFNA1.

Its subcellular location is the secreted. Its function is as follows. Counteracts the antiviral effects of host IFN-alpha/beta and key IFN-inducible proteins involved in viral RNA degradation suxh as host OAS1. Acts as a soluble IFN-alpha receptor and thus inhibits the interaction between host IFN-alpha and its receptor. The chain is Soluble interferon alpha/beta receptor OPG204 (OPG204) from Homo sapiens (Human).